The primary structure comprises 174 residues: MERAREIGEGSASSLREQRNLREKERRMRMKHLFSILSSHVSPTRRLPVPQLIDQAVSYMIQLKEKVNYLNEMKRRMLGGEVKNRSEGSSLLPKLSIRSLDSIIEMNLVMDLNMKGVMLHKLVSVFEEEGAQVMSANLQNLNDRTFYTIIAQAIICRIGIDPSRIEERLRDIIS.

Residues 14–63 (SLREQRNLREKERRMRMKHLFSILSSHVSPTRRLPVPQLIDQAVSYMIQL) form the bHLH domain.

It belongs to the bHLH protein family.

Its subcellular location is the nucleus. The protein is Transcription factor bHLH168 of Arabidopsis thaliana (Mouse-ear cress).